The chain runs to 1052 residues: ATP-dependent DNA helicase MPH1 (1052 aa).

A Helicase ATP-binding domain is found at 89–256; that stretch reads IVRKGLLQNI…EVVNNLNISK (168 aa). An ATP-binding site is contributed by 102–109; the sequence is IPTGMGKT. A DEAH box motif is present at residues 204–207; that stretch reads DEAH. The Helicase C-terminal domain occupies 432–649; sequence ELTQFFYENP…HLVQYRKSDR (218 aa). 4 disordered regions span residues 495-550, 798-832, 869-898, and 1002-1052; these read HGPK…NQKQ, IGDTRNKAKASSSMKVKKEPTMAVDHSDDEEDLPL, SKRQRLQPEVQPEVQPEVQPEVQPEVQPEV, and HTVS…DSDF. Basic and acidic residues predominate over residues 503–532; that stretch reads SDREKRLEEERRMDEEKKQAALQEKLERTS. The span at 534 to 549 shows a compositional bias: polar residues; it reads RTGSSEEAQLSGMNQK. Composition is skewed to low complexity over residues 875–898 and 1005–1028; these read QPEVQPEVQPEVQPEVQPEVQPEV and SQSQGQSNSQSQAHSTSQKSQQAS. Over residues 1029–1040 the composition is skewed to basic and acidic residues; it reads QKDRSSQDKDLT. Residues 1043–1052 show a composition bias toward acidic residues; that stretch reads ELEDLLDSDF.

The protein belongs to the DEAD box helicase family. DEAH subfamily. FANCM sub-subfamily. As to quaternary structure, interacts with the MHF histone-fold complex to form the FANCM-MHF complex.

It localises to the nucleus. It carries out the reaction ATP + H2O = ADP + phosphate + H(+). ATP-dependent DNA helicase involved in DNA damage repair by homologous recombination and in genome maintenance. Capable of unwinding D-loops. Plays a role in limiting crossover recombinants during mitotic DNA double-strand break (DSB) repair. Component of a FANCM-MHF complex which promotes gene conversion at blocked replication forks, probably by reversal of the stalled fork. This is ATP-dependent DNA helicase MPH1 from Candida glabrata (strain ATCC 2001 / BCRC 20586 / JCM 3761 / NBRC 0622 / NRRL Y-65 / CBS 138) (Yeast).